A 112-amino-acid chain; its full sequence is Small ribosomal subunit protein bS16 (112 aa).

Belongs to the bacterial ribosomal protein bS16 family.

The protein is Small ribosomal subunit protein bS16 of Aquifex aeolicus (strain VF5).